The following is a 347-amino-acid chain: Mitochondrial glycine transporter (347 aa).

Solcar repeat units lie at residues 18–102 (SKPT…LRTA), 138–222 (LSHT…SKRS), and 247–331 (STAS…LIMW). Helical transmembrane passes span 24–49 (FAAG…TRVQ), 77–103 (GTLP…RTAV), 144–169 (LITG…VRYE), 197–220 (GFGA…EQSK), 251–277 (INFI…KTRV), and 306–324 (GLGL…AWTV).

Belongs to the mitochondrial carrier (TC 2.A.29) family. SLC25A38 subfamily.

It is found in the mitochondrion inner membrane. It carries out the reaction glycine(in) = glycine(out). Mitochondrial glycine transporter that imports glycine into the mitochondrial matrix. Plays an important role in providing glycine for the first enzymatic step in heme biosynthesis, the condensation of glycine with succinyl-CoA to produce 5-aminolevulinate (ALA) in the mitochondrial matrix. The chain is Mitochondrial glycine transporter from Coccidioides immitis (strain RS) (Valley fever fungus).